The primary structure comprises 289 residues: Diaminopimelate epimerase (289 aa).

The substrate site is built by Asn17, Gln47, and Asn67. Residue Cys76 is the Proton donor of the active site. Substrate-binding positions include 77–78 (GN), Asn164, Asn198, and 216–217 (ER). Cys225 functions as the Proton acceptor in the catalytic mechanism. Residue 226 to 227 (GS) coordinates substrate.

This sequence belongs to the diaminopimelate epimerase family. In terms of assembly, homodimer.

It localises to the cytoplasm. The catalysed reaction is (2S,6S)-2,6-diaminopimelate = meso-2,6-diaminopimelate. It functions in the pathway amino-acid biosynthesis; L-lysine biosynthesis via DAP pathway; DL-2,6-diaminopimelate from LL-2,6-diaminopimelate: step 1/1. Functionally, catalyzes the stereoinversion of LL-2,6-diaminopimelate (L,L-DAP) to meso-diaminopimelate (meso-DAP), a precursor of L-lysine and an essential component of the bacterial peptidoglycan. The polypeptide is Diaminopimelate epimerase (Bradyrhizobium sp. (strain BTAi1 / ATCC BAA-1182)).